Reading from the N-terminus, the 357-residue chain is Peptide chain release factor 1 (357 aa).

N5-methylglutamine is present on Gln-232.

It belongs to the prokaryotic/mitochondrial release factor family. Post-translationally, methylated by PrmC. Methylation increases the termination efficiency of RF1.

It is found in the cytoplasm. In terms of biological role, peptide chain release factor 1 directs the termination of translation in response to the peptide chain termination codons UAG and UAA. The polypeptide is Peptide chain release factor 1 (Oleidesulfovibrio alaskensis (strain ATCC BAA-1058 / DSM 17464 / G20) (Desulfovibrio alaskensis)).